The primary structure comprises 305 residues: MVLDGFAAHFDAYLENIVREGKSEHTVAAYRRDLEELFALLAQMPSEDVGGVPQDLSRRDFTAALRRLSQRGLNARTLARKLSSWRQYCVWLVERGLLHTDPTADIKPPKQPERVPKALPQEWLNRMLDLPVDGGDPLAVRDHALFELMYGSGLRVSEIHGLNADDVYLDEAWVHVTGKGRKQRQVPLTGKSVEALKNYLPLRQTASDGKALFTGRNGTRLSQRQIQKRLAQWAAQNGDGRHVSPHMMRHSYAGHLLQASRDIRAVQELLGHSSLSTTQIYTKLDFDHIARLYDEAHPRAKRRDE.

The region spanning 1–93 (MVLDGFAAHF…SWRQYCVWLV (93 aa)) is the Core-binding (CB) domain. In terms of domain architecture, Tyr recombinase spans 114-294 (RVPKALPQEW…DFDHIARLYD (181 aa)). Active-site residues include R155, K179, H246, R249, and H272. The O-(3'-phospho-DNA)-tyrosine intermediate role is filled by Y281.

Belongs to the 'phage' integrase family. XerC subfamily. In terms of assembly, forms a cyclic heterotetrameric complex composed of two molecules of XerC and two molecules of XerD.

Its subcellular location is the cytoplasm. Site-specific tyrosine recombinase, which acts by catalyzing the cutting and rejoining of the recombining DNA molecules. The XerC-XerD complex is essential to convert dimers of the bacterial chromosome into monomers to permit their segregation at cell division. It also contributes to the segregational stability of plasmids. The polypeptide is Tyrosine recombinase XerC (Neisseria meningitidis serogroup C / serotype 2a (strain ATCC 700532 / DSM 15464 / FAM18)).